A 204-amino-acid chain; its full sequence is Holliday junction branch migration complex subunit RuvA (204 aa).

A domain I region spans residues 1–64; it reads MIGKLKGTID…EDQLKLFGFM (64 aa). Residues 65–143 form a domain II region; it reads TALEREWFNL…AFAGEAINIG (79 aa). A flexible linker region spans residues 144-151; it reads LKQELGEG. The interval 152-204 is domain III; it reads VAAAPVADAVSALTNLGYSRDQAANAIAAAMKTAGEGADSAKLIRLGLKELAR.

Belongs to the RuvA family. Homotetramer. Forms an RuvA(8)-RuvB(12)-Holliday junction (HJ) complex. HJ DNA is sandwiched between 2 RuvA tetramers; dsDNA enters through RuvA and exits via RuvB. An RuvB hexamer assembles on each DNA strand where it exits the tetramer. Each RuvB hexamer is contacted by two RuvA subunits (via domain III) on 2 adjacent RuvB subunits; this complex drives branch migration. In the full resolvosome a probable DNA-RuvA(4)-RuvB(12)-RuvC(2) complex forms which resolves the HJ.

The protein resides in the cytoplasm. Functionally, the RuvA-RuvB-RuvC complex processes Holliday junction (HJ) DNA during genetic recombination and DNA repair, while the RuvA-RuvB complex plays an important role in the rescue of blocked DNA replication forks via replication fork reversal (RFR). RuvA specifically binds to HJ cruciform DNA, conferring on it an open structure. The RuvB hexamer acts as an ATP-dependent pump, pulling dsDNA into and through the RuvAB complex. HJ branch migration allows RuvC to scan DNA until it finds its consensus sequence, where it cleaves and resolves the cruciform DNA. In Rhizobium johnstonii (strain DSM 114642 / LMG 32736 / 3841) (Rhizobium leguminosarum bv. viciae), this protein is Holliday junction branch migration complex subunit RuvA.